The chain runs to 1404 residues: DNA-directed RNA polymerase subunit beta' (1404 aa).

Zn(2+) contacts are provided by Cys70, Cys72, Cys85, and Cys88. Mg(2+)-binding residues include Asp460, Asp462, and Asp464. Residues Cys814, Cys888, Cys895, and Cys898 each contribute to the Zn(2+) site.

The protein belongs to the RNA polymerase beta' chain family. As to quaternary structure, the RNAP catalytic core consists of 2 alpha, 1 beta, 1 beta' and 1 omega subunit. When a sigma factor is associated with the core the holoenzyme is formed, which can initiate transcription. Mg(2+) is required as a cofactor. The cofactor is Zn(2+).

The enzyme catalyses RNA(n) + a ribonucleoside 5'-triphosphate = RNA(n+1) + diphosphate. DNA-dependent RNA polymerase catalyzes the transcription of DNA into RNA using the four ribonucleoside triphosphates as substrates. In Shewanella halifaxensis (strain HAW-EB4), this protein is DNA-directed RNA polymerase subunit beta'.